The chain runs to 239 residues: Ribosomal RNA small subunit methyltransferase G (239 aa).

S-adenosyl-L-methionine-binding positions include Gly-77, Phe-82, 128–129 (AE), and Arg-146. The tract at residues 214-239 (IDKKRQTPKKYPRKPGTPNKTPLLEK) is disordered.

This sequence belongs to the methyltransferase superfamily. RNA methyltransferase RsmG family.

The protein resides in the cytoplasm. Its function is as follows. Specifically methylates the N7 position of guanine in position 535 of 16S rRNA. This Staphylococcus aureus (strain Mu3 / ATCC 700698) protein is Ribosomal RNA small subunit methyltransferase G.